The primary structure comprises 270 residues: Tetraspanin-17 (270 aa).

Topologically, residues 1–19 are cytoplasmic; that stretch reads MPGKHQHFQEPEVGCCGKY. A helical membrane pass occupies residues 20–40; the sequence is FLFGFNIVFWVLGALFLAIGL. The Extracellular segment spans residues 41 to 63; sequence WAWGEKGVLSNISALTDLGGLDP. N-linked (GlcNAc...) asparagine glycosylation occurs at N51. A helical membrane pass occupies residues 64–84; the sequence is VWLFVVVGGVMSVLGFAGCIG. The Cytoplasmic segment spans residues 85 to 94; that stretch reads ALRENTFLLK. The helical transmembrane segment at 95-115 threads the bilayer; sequence FFSVFLGLIFFLELATGILAF. At 116-234 the chain is on the extracellular side; sequence VFKDWIRDQL…GQFEKWLQDN (119 aa). Intrachain disulfides connect C155–C223, C156–C188, C172–C182, and C189–C202. A glycan (N-linked (GlcNAc...) asparagine) is linked at N171. The chain crosses the membrane as a helical span at residues 235 to 255; sequence LIVVAGVFMGIALLQIFGICL. The Cytoplasmic segment spans residues 256–270; that stretch reads AQNLVSDIKAVKANW.

The protein belongs to the tetraspanin (TM4SF) family. In terms of assembly, interacts with ADAM10; the interaction influences ADAM10 substrate specificity, endocytosis and turnover.

The protein resides in the cell membrane. In terms of biological role, part of TspanC8 subgroup, composed of 6 members that interact with the transmembrane metalloprotease ADAM10. This interaction is required for ADAM10 exit from the endoplasmic reticulum and for enzymatic maturation and trafficking to the cell surface as well as substrate specificity. Different TspanC8/ADAM10 complexes have distinct substrates. Seems to regulate VE-cadherin expression in endothelial cells probably through interaction with ADAM10, promoting leukocyte transmigration. The protein is Tetraspanin-17 of Homo sapiens (Human).